Consider the following 663-residue polypeptide: Methionine--tRNA ligase (663 aa).

The 'HIGH' region signature appears at 10 to 20 (AYTNGPLHLGH). Residues C142, C145, C154, and C157 each coordinate Zn(2+). The short motif at 323–327 (KMSTS) is the 'KMSKS' region element. T326 is an ATP binding site. The tRNA-binding domain occupies 563-663 (YFTKVDLRVG…REISLGSKIH (101 aa)).

It belongs to the class-I aminoacyl-tRNA synthetase family. MetG type 1 subfamily. As to quaternary structure, homodimer. Requires Zn(2+) as cofactor.

It localises to the cytoplasm. The enzyme catalyses tRNA(Met) + L-methionine + ATP = L-methionyl-tRNA(Met) + AMP + diphosphate. Is required not only for elongation of protein synthesis but also for the initiation of all mRNA translation through initiator tRNA(fMet) aminoacylation. The polypeptide is Methionine--tRNA ligase (Methanococcus vannielii (strain ATCC 35089 / DSM 1224 / JCM 13029 / OCM 148 / SB)).